The following is a 302-amino-acid chain: Glycine--tRNA ligase alpha subunit (302 aa).

It belongs to the class-II aminoacyl-tRNA synthetase family. As to quaternary structure, tetramer of two alpha and two beta subunits.

The protein localises to the cytoplasm. It catalyses the reaction tRNA(Gly) + glycine + ATP = glycyl-tRNA(Gly) + AMP + diphosphate. This Enterococcus faecalis (strain ATCC 700802 / V583) protein is Glycine--tRNA ligase alpha subunit.